A 315-amino-acid polypeptide reads, in one-letter code: Pantothenate kinase (315 aa).

ATP is bound at residue 94–101; that stretch reads GSVAVGKS.

Belongs to the prokaryotic pantothenate kinase family.

It is found in the cytoplasm. It carries out the reaction (R)-pantothenate + ATP = (R)-4'-phosphopantothenate + ADP + H(+). It participates in cofactor biosynthesis; coenzyme A biosynthesis; CoA from (R)-pantothenate: step 1/5. The chain is Pantothenate kinase from Citrobacter koseri (strain ATCC BAA-895 / CDC 4225-83 / SGSC4696).